The sequence spans 247 residues: Carboxy-S-adenosyl-L-methionine synthase (247 aa).

S-adenosyl-L-methionine contacts are provided by residues Tyr-39, 89 to 90 (DN), 117 to 118 (DI), Asn-132, and Arg-199.

The protein belongs to the class I-like SAM-binding methyltransferase superfamily. Cx-SAM synthase family. In terms of assembly, homodimer.

The catalysed reaction is prephenate + S-adenosyl-L-methionine = carboxy-S-adenosyl-L-methionine + 3-phenylpyruvate + H2O. Its function is as follows. Catalyzes the conversion of S-adenosyl-L-methionine (SAM) to carboxy-S-adenosyl-L-methionine (Cx-SAM). The chain is Carboxy-S-adenosyl-L-methionine synthase from Sodalis glossinidius (strain morsitans).